Here is a 316-residue protein sequence, read N- to C-terminus: Ribosomal RNA small subunit methyltransferase H (316 aa).

S-adenosyl-L-methionine contacts are provided by residues 35-37 (SGH), D55, F84, D105, and Q112.

This sequence belongs to the methyltransferase superfamily. RsmH family.

Its subcellular location is the cytoplasm. The catalysed reaction is cytidine(1402) in 16S rRNA + S-adenosyl-L-methionine = N(4)-methylcytidine(1402) in 16S rRNA + S-adenosyl-L-homocysteine + H(+). Functionally, specifically methylates the N4 position of cytidine in position 1402 (C1402) of 16S rRNA. The polypeptide is Ribosomal RNA small subunit methyltransferase H (Streptococcus pyogenes serotype M6 (strain ATCC BAA-946 / MGAS10394)).